We begin with the raw amino-acid sequence, 448 residues long: Exodeoxyribonuclease 7 large subunit (448 aa).

It belongs to the XseA family. As to quaternary structure, heterooligomer composed of large and small subunits.

The protein localises to the cytoplasm. The catalysed reaction is Exonucleolytic cleavage in either 5'- to 3'- or 3'- to 5'-direction to yield nucleoside 5'-phosphates.. Bidirectionally degrades single-stranded DNA into large acid-insoluble oligonucleotides, which are then degraded further into small acid-soluble oligonucleotides. In Histophilus somni (strain 129Pt) (Haemophilus somnus), this protein is Exodeoxyribonuclease 7 large subunit.